The sequence spans 898 residues: Protein translocase subunit SecA (898 aa).

Residues glutamine 87, 105-109 (GEGKT), and aspartate 512 each bind ATP. Polar residues predominate over residues 855-865 (MQYQNNEGTSS). Residues 855 to 898 (MQYQNNEGTSSLHEKSEHKIGRNESCPCGSGKKYKHCHGSKAKY) form a disordered region. Basic and acidic residues predominate over residues 866-876 (LHEKSEHKIGR). Zn(2+)-binding residues include cysteine 880, cysteine 882, cysteine 891, and histidine 892. Over residues 886 to 898 (KKYKHCHGSKAKY) the composition is skewed to basic residues.

The protein belongs to the SecA family. Monomer and homodimer. Part of the essential Sec protein translocation apparatus which comprises SecA, SecYEG and auxiliary proteins SecDF-YajC and YidC. Zn(2+) is required as a cofactor.

The protein resides in the cell inner membrane. The protein localises to the cytoplasm. It catalyses the reaction ATP + H2O + cellular proteinSide 1 = ADP + phosphate + cellular proteinSide 2.. Functionally, part of the Sec protein translocase complex. Interacts with the SecYEG preprotein conducting channel. Has a central role in coupling the hydrolysis of ATP to the transfer of proteins into and across the cell membrane, serving both as a receptor for the preprotein-SecB complex and as an ATP-driven molecular motor driving the stepwise translocation of polypeptide chains across the membrane. In Histophilus somni (strain 129Pt) (Haemophilus somnus), this protein is Protein translocase subunit SecA.